A 235-amino-acid polypeptide reads, in one-letter code: tRNA (guanine-N(1)-)-methyltransferase (235 aa).

S-adenosyl-L-methionine contacts are provided by residues glycine 114 and 134-139 (VGDYIL).

Belongs to the RNA methyltransferase TrmD family. As to quaternary structure, homodimer.

It localises to the cytoplasm. The catalysed reaction is guanosine(37) in tRNA + S-adenosyl-L-methionine = N(1)-methylguanosine(37) in tRNA + S-adenosyl-L-homocysteine + H(+). Specifically methylates guanosine-37 in various tRNAs. This chain is tRNA (guanine-N(1)-)-methyltransferase, found in Chelativorans sp. (strain BNC1).